The following is a 677-amino-acid chain: UvrABC system protein B (677 aa).

Residues 31 to 417 (DRIESGETDI…SDGVVEQIIR (387 aa)) enclose the Helicase ATP-binding domain. An ATP-binding site is contributed by 44 to 51 (GATGTGKS). Residues 97–120 (YYDYYQPEAYVPKTDTFIEKDASV) carry the Beta-hairpin motif. The Helicase C-terminal domain occupies 434–596 (QIDDLLEEIR…VTPVPIKKTV (163 aa)). The UVR domain maps to 629–664 (KSHIKSLEAKMYMAAESLMFEEAAELRDEIQSLKEK).

The protein belongs to the UvrB family. Forms a heterotetramer with UvrA during the search for lesions. Interacts with UvrC in an incision complex.

It localises to the cytoplasm. Its function is as follows. The UvrABC repair system catalyzes the recognition and processing of DNA lesions. A damage recognition complex composed of 2 UvrA and 2 UvrB subunits scans DNA for abnormalities. Upon binding of the UvrA(2)B(2) complex to a putative damaged site, the DNA wraps around one UvrB monomer. DNA wrap is dependent on ATP binding by UvrB and probably causes local melting of the DNA helix, facilitating insertion of UvrB beta-hairpin between the DNA strands. Then UvrB probes one DNA strand for the presence of a lesion. If a lesion is found the UvrA subunits dissociate and the UvrB-DNA preincision complex is formed. This complex is subsequently bound by UvrC and the second UvrB is released. If no lesion is found, the DNA wraps around the other UvrB subunit that will check the other stand for damage. The chain is UvrABC system protein B from Tropheryma whipplei (strain TW08/27) (Whipple's bacillus).